The following is a 1823-amino-acid chain: MALSSAWRSVLPLWLLWSAACSRAASGDDNAFPFDIEGSSAVGRQDPPETSEPRVALGRLPPAAEKCNAGFFHTLSGECVPCDCNGNSNECLDGSGYCVHCQRNTTGEHCEKCLDGYIGDSIRGAPQFCQPCPCPLPHLANFAESCYRKNGAVRCICNENYAGPNCERCAPGYYGNPLLIGSTCKKCDCSGNSDPNLIFEDCDEVTGQCRNCLRNTTGFKCERCAPGYYGDARIAKNCAVCNCGGGPCDSVTGECLEEGFEPPTGMDCPTISCDKCVWDLTDDLRLAALSIEEGKSGVLSVSSGAAAHRHVNEINATIYLLKTKLSERENQYALRKIQINNAENTMKSLLSDVEELVEKENQASRKGQLVQKESMDTINHASQLVEQAHDMRDKIQEINNKMLYYGEEHELSPKEISEKLVLAQKMLEEIRSRQPFFTQRELVDEEADEAYELLSQAESWQRLHNETRTLFPVVLEQLDDYNAKLSDLQEALDQALNYVRDAEDMNRATAARQRDHEKQQERVREQMEVVNMSLSTSADSLTTPRLTLSELDDIIKNASGIYAEIDGAKSELQVKLSNLSNLSHDLVQEAIDHAQDLQQEANELSRKLHSSDMNGLVQKALDASNVYENIVNYVSEANETAEFALNTTDRIYDAVSGIDTQIIYHKDESENLLNQARELQAKAESSSDEAVADTSRRVGGALARKSALKTRLSDAVKQLQAAERGDAQQRLGQSRLITEEANRTTMEVQQATAPMANNLTNWSQNLQHFDSSAYNTAVNSARDAVRNLTEVVPQLLDQLRTVEQKRPASNVSASIQRIRELIAQTRSVASKIQVSMMFDGQSAVEVHSRTSMDDLKAFTSLSLYMKPPVKRPELTETADQFILYLGSKNAKKEYMGLAIKNDNLVYVYNLGTKDVEIPLDSKPVSSWPAYFSIVKIERVGKHGKVFLTVPSLSSTAEEKFIKKGEFSGDDSLLDLDPEDTVFYVGGVPSNFKLPTSLNLPGFVGCLELATLNNDVISLYNFKHIYNMDPSTSVPCARDKLAFTQSRAASYFFDGSGYAVVRDITRRGKFGQVTRFDIEVRTPADNGLILLMVNGSMFFRLEMRNGYLHVFYDFGFSGGPVHLEDTLKKAQINDAKYHEISIIYHNDKKMILVVDRRHVKSMDNEKMKIPFTDIYIGGAPPEILQSRALRAHLPLDINFRGCMKGFQFQKKDFNLLEQTETLGVGYGCPEDSLISRRAYFNGQSFIASIQKISFFDGFEGGFNFRTLQPNGLLFYYASGSDVFSISLDNGTVIMDVKGIKVQSVDKQYNDGLSHFVISSVSPTRYELIVDKSRVGSKNPTKGKIEQTQASEKKFYFGGSPISAQYANFTGCISNAYFTRVDRDVEVEDFQRYTEKVHTSLYECPIESSPLFLLHKKGKNLSKPKASQNKKGGKSKDAPSWDPVALKLPERNTPRNSHCHLSNSPRAIEHAYQYGGTANSRQEFEHLKGDFGAKSQFSIRLRTRSSHGMIFYVSDQEENDFMTLFLAHGRLVYMFNVGHKKLKIRSQEKYNDGLWHDVIFIRERSSGRLVIDGLRVLEESLPPTEATWKIKGPIYLGGVAPGKAVKNVQINSIYSFSGCLSNLQLNGASITSASQTFSVTPCFEGPMETGTYFSTEGGYVVLDESFNIGLKFEIAFEVRPRSSSGTLVHGHSVNGEYLNVHMKNGQVIVKVNNGIRDFSTSVTPKQSLCDGRWHRITVIRDSNVVQLDVDSEVNHVVGPLNPKPIDHREPVFVGGVPESLLTPRLAPSKPFTGCIRHFVIDGHPVSFSKAALVSGAVSINSCPAA.

The first 24 residues, methionine 1–alanine 24, serve as a signal peptide directing secretion. Serine 39 carries an O-linked (Xyl...) (chondroitin sulfate) serine glycan. 12 disulfide bridges follow: cysteine 82–cysteine 91, cysteine 84–cysteine 98, cysteine 101–cysteine 110, cysteine 113–cysteine 129, cysteine 132–cysteine 146, cysteine 134–cysteine 155, cysteine 157–cysteine 166, cysteine 169–cysteine 184, cysteine 187–cysteine 202, cysteine 189–cysteine 209, cysteine 212–cysteine 221, and cysteine 224–cysteine 238. 3 Laminin EGF-like domains span residues cysteine 82 to proline 131, cysteine 132 to lysine 186, and cysteine 187 to valine 240. An N-linked (GlcNAc...) asparagine glycan is attached at asparagine 104. Asparagine 215 is a glycosylation site (N-linked (GlcNAc...) asparagine). Residues cysteine 241–cysteine 255 enclose the Laminin EGF-like 4; truncated domain. Residues leucine 256–isoleucine 832 are domain II and I. The N-linked (GlcNAc...) asparagine glycan is linked to asparagine 315. Positions leucine 320 to leucine 403 form a coiled coil. N-linked (GlcNAc...) asparagine glycosylation occurs at asparagine 465. Residues valine 473–glutamate 528 are a coiled coil. Asparagine 531, asparagine 557, asparagine 578, asparagine 581, asparagine 638, and asparagine 646 each carry an N-linked (GlcNAc...) asparagine glycan. A coiled-coil region spans residues asparagine 581–asparagine 614. Positions isoleucine 662–arginine 724 form a coiled coil. Residues arginine 724–aspartate 726 carry the Cell attachment site motif. Residues asparagine 742, asparagine 758, asparagine 761, asparagine 787, and asparagine 810 are each glycosylated (N-linked (GlcNAc...) asparagine). Residues alanine 777–arginine 806 adopt a coiled-coil conformation. 3 Laminin G-like domains span residues glutamine 833 to cysteine 1035, alanine 1047 to cysteine 1227, and serine 1234 to cysteine 1402. A disulfide bridge connects residues cysteine 1005 and cysteine 1035. Asparagine 1093 carries N-linked (GlcNAc...) asparagine glycosylation. Cysteine 1201 and cysteine 1227 are joined by a disulfide. 2 N-linked (GlcNAc...) asparagine glycosylation sites follow: asparagine 1288 and asparagine 1366. An intrachain disulfide couples cysteine 1370 to cysteine 1402. N-linked (GlcNAc...) asparagine glycosylation occurs at asparagine 1418. The disordered stretch occupies residues leucine 1419 to aspartate 1440. Laminin G-like domains lie at alanine 1469 to cysteine 1640 and threonine 1647 to cysteine 1820. 2 cysteine pairs are disulfide-bonded: cysteine 1617–cysteine 1640 and cysteine 1792–cysteine 1820.

Laminin is a complex glycoprotein, consisting of three different polypeptide chains (alpha, beta, gamma), which are bound to each other by disulfide bonds into a cross-shaped molecule comprising one long and three short arms with globules at each end. Alpha-4 is a subunit of laminin-8 (laminin-411), laminin-9 (laminin-421) and laminin-14 (laminin-423). In terms of tissue distribution, detected in placenta (at protein level). Detected in fibroblasts and urine (at protein level). In adult, strong expression in heart, lung, ovary small and large intestines, placenta, liver; weak or no expression in skeletal muscle, kidney, pancreas, testis, prostate, brain. High expression in fetal lung and kidney. Expression in fetal and newborn tissues is observed in certain mesenchymal cells in tissues such as smooth muscle and dermis.

The protein resides in the secreted. The protein localises to the extracellular space. It is found in the extracellular matrix. It localises to the basement membrane. In terms of biological role, binding to cells via a high affinity receptor, laminin is thought to mediate the attachment, migration and organization of cells into tissues during embryonic development by interacting with other extracellular matrix components. This chain is Laminin subunit alpha-4 (LAMA4), found in Homo sapiens (Human).